Here is a 146-residue protein sequence, read N- to C-terminus: Protein translocase subunit SecE (146 aa).

The tract at residues 1–81 (MSDERYAASD…KVKKPKKSAD (81 aa)) is disordered. Over residues 10-20 (DGGGTEVGSGT) the composition is skewed to gly residues. Positions 45–54 (RAANASNTGA) are enriched in polar residues. Basic and acidic residues predominate over residues 69 to 81 (KEGKVKKPKKSAD). Residues 118–138 (VVLAFLAFMVALVGLADFGLA) traverse the membrane as a helical segment.

The protein belongs to the SecE/SEC61-gamma family. Component of the Sec protein translocase complex. Heterotrimer consisting of SecY, SecE and SecG subunits. The heterotrimers can form oligomers, although 1 heterotrimer is thought to be able to translocate proteins. Interacts with the ribosome. Interacts with SecDF, and other proteins may be involved. Interacts with SecA.

The protein resides in the cell membrane. Essential subunit of the Sec protein translocation channel SecYEG. Clamps together the 2 halves of SecY. May contact the channel plug during translocation. This is Protein translocase subunit SecE from Mycobacterium leprae (strain TN).